The primary structure comprises 542 residues: Adenosylmethionine-8-amino-7-oxononanoate aminotransferase (542 aa).

Position 170 to 171 (170 to 171) interacts with pyridoxal 5'-phosphate; the sequence is GS. Tyr205 is a binding site for substrate. Asp311 provides a ligand contact to pyridoxal 5'-phosphate. Residues Lys340, Gly375, and Arg470 each coordinate substrate. At Lys340 the chain carries N6-(pyridoxal phosphate)lysine. Residues 509–542 form a disordered region; sequence DGGLWTKRPDGPDNPDKANTPDTPDGARTGETVV. The span at 515–524 shows a compositional bias: basic and acidic residues; it reads KRPDGPDNPD.

Belongs to the class-III pyridoxal-phosphate-dependent aminotransferase family. BioA subfamily. Homodimer. Requires pyridoxal 5'-phosphate as cofactor.

The protein localises to the cytoplasm. The catalysed reaction is (8S)-8-amino-7-oxononanoate + S-adenosyl-L-methionine = S-adenosyl-4-methylsulfanyl-2-oxobutanoate + (7R,8S)-7,8-diammoniononanoate. It functions in the pathway cofactor biosynthesis; biotin biosynthesis; 7,8-diaminononanoate from 8-amino-7-oxononanoate (SAM route): step 1/1. In terms of biological role, catalyzes the transfer of the alpha-amino group from S-adenosyl-L-methionine (SAM) to 7-keto-8-aminopelargonic acid (KAPA) to form 7,8-diaminopelargonic acid (DAPA). It is the only aminotransferase known to utilize SAM as an amino donor. In Nitratidesulfovibrio vulgaris (strain ATCC 29579 / DSM 644 / CCUG 34227 / NCIMB 8303 / VKM B-1760 / Hildenborough) (Desulfovibrio vulgaris), this protein is Adenosylmethionine-8-amino-7-oxononanoate aminotransferase.